A 436-amino-acid chain; its full sequence is Serine/threonine-protein kinase STK11 (436 aa).

S31 carries the post-translational modification Phosphoserine. An N6-acetyllysine mark is found at K44 and K48. A sufficient for interaction with SIRT1 region spans residues 45–90 (LIGKYLMGDLLGEGSYGKVKEVLDSETLCRRAVKILKKKKLRRIPN). Positions 49–309 (YLMGDLLGEG…IRQIRQHSWF (261 aa)) constitute a Protein kinase domain. ATP contacts are provided by residues 55–63 (LGEGSYGKV) and K78. Residues K96 and K97 each carry the N6-acetyllysine modification. D176 functions as the Proton acceptor in the catalytic mechanism. Residue T189 is modified to Phosphothreonine; by autocatalysis. 2 positions are modified to N6-acetyllysine: K296 and K311. S325 bears the Phosphoserine mark. A Phosphothreonine; by autocatalysis modification is found at T336. T366 bears the Phosphothreonine; by ATM and autocatalysis mark. The disordered stretch occupies residues 397–421 (GTEPQLSSKVKPEGRPGAANPARKV). Phosphoserine is present on S403. N6-acetyllysine is present on K420. C422 carries the S-palmitoyl cysteine lipid modification. K426 carries the post-translational modification N6-acetyllysine. S431 is subject to Phosphoserine; by autocatalysis, PKA, PKC/PRKCZ and RPS6KA1. Position 433 is a cysteine methyl ester (C433). C433 carries S-farnesyl cysteine lipidation. Residue K434 is modified to N6-acetyllysine. Positions 434 to 436 (KQQ) are cleaved as a propeptide — removed in mature form.

The protein belongs to the protein kinase superfamily. CAMK Ser/Thr protein kinase family. LKB1 subfamily. Catalytic component of a trimeric complex composed of STK11/LKB1, STRAD (STRADA or STRADB) and CAB39/MO25 (CAB39/MO25alpha or CAB39L/MO25beta): the complex tethers STK11/LKB1 in the cytoplasm and stimulates its catalytic activity. Found in a ternary complex composed of SMAD4, STK11/LKB1 and STK11IP. Interacts with NR4A1, p53/TP53, SMAD4, STK11IP and WDR6. Interacts with NISCH; this interaction may increase STK11 activity. Interacts with SIRT1; the interaction deacetylates STK11. Interacts with CDKN1A. It depends on Mg(2+) as a cofactor. The cofactor is Mn(2+). Post-translationally, phosphorylated by ATM at Thr-366 following ionizing radiation (IR). Phosphorylation at Ser-431 by RPS6KA1 and/or some PKA is required to inhibit cell growth. Phosphorylation at Ser-431 is also required during neuronal polarization to mediate phosphorylation of BRSK1 and BRSK2. Phosphorylation by PKC/PRKCZ at Ser-397 in isoform 2 promotes metformin (or peroxynitrite)-induced nuclear export of STK11 and activation of AMPK. UV radiation -induced phosphorylation at Thr-366 mediates CDKN1A degradation. Acetylated. Deacetylation at Lys-48 enhances cytoplasmic localization and kinase activity in vitro. In terms of tissue distribution, expressed in brain, heart, testis, skeletal muscle and spleen, and weakly in liver and kidney. Isoform 1 is expressed at highest levels in the brain. Isoform 2 is expressed at highest levels in the testis, primarily in postmitotic developing germ cells (at protein level).

It localises to the nucleus. Its subcellular location is the cytoplasm. It is found in the membrane. The protein localises to the mitochondrion. It carries out the reaction L-seryl-[protein] + ATP = O-phospho-L-seryl-[protein] + ADP + H(+). The catalysed reaction is L-threonyl-[protein] + ATP = O-phospho-L-threonyl-[protein] + ADP + H(+). Activated by forming a complex with STRAD (STRADA or STRADB) and CAB39/MO25 (CAB39/MO25alpha or CAB39L/MO25beta): STRADA (or STRADB)-binding promotes a conformational change of STK11/LKB1 in an active conformation, which is stabilized by CAB39/MO25alpha (or CAB39L/MO25beta) interacting with the STK11/LKB1 activation loop. Sequestration in the nucleus by NR4A1 prevents it from phosphorylating and activating cytoplasmic AMPK. Its function is as follows. Tumor suppressor serine/threonine-protein kinase that controls the activity of AMP-activated protein kinase (AMPK) family members, thereby playing a role in various processes such as cell metabolism, cell polarity, apoptosis and DNA damage response. Acts by phosphorylating the T-loop of AMPK family proteins, thus promoting their activity: phosphorylates PRKAA1, PRKAA2, BRSK1, BRSK2, MARK1, MARK2, MARK3, MARK4, NUAK1, NUAK2, SIK1, SIK2, SIK3 and SNRK but not MELK. Also phosphorylates non-AMPK family proteins such as STRADA, PTEN and possibly p53/TP53. Acts as a key upstream regulator of AMPK by mediating phosphorylation and activation of AMPK catalytic subunits PRKAA1 and PRKAA2 and thereby regulates processes including: inhibition of signaling pathways that promote cell growth and proliferation when energy levels are low, glucose homeostasis in liver, activation of autophagy when cells undergo nutrient deprivation, and B-cell differentiation in the germinal center in response to DNA damage. Also acts as a regulator of cellular polarity by remodeling the actin cytoskeleton. Required for cortical neuron polarization by mediating phosphorylation and activation of BRSK1 and BRSK2, leading to axon initiation and specification. Involved in DNA damage response: interacts with p53/TP53 and recruited to the CDKN1A/WAF1 promoter to participate in transcription activation. Able to phosphorylate p53/TP53; the relevance of such result in vivo is however unclear and phosphorylation may be indirect and mediated by downstream STK11/LKB1 kinase NUAK1. Also acts as a mediator of p53/TP53-dependent apoptosis via interaction with p53/TP53: translocates to the mitochondrion during apoptosis and regulates p53/TP53-dependent apoptosis pathways. Regulates UV radiation-induced DNA damage response mediated by CDKN1A. In association with NUAK1, phosphorylates CDKN1A in response to UV radiation and contributes to its degradation which is necessary for optimal DNA repair. In terms of biological role, has a role in spermiogenesis. The polypeptide is Serine/threonine-protein kinase STK11 (Rattus norvegicus (Rat)).